The chain runs to 440 residues: tRNA(Ile)-lysidine synthase (440 aa).

Residue 31–36 coordinates ATP; that stretch reads SGGADS.

It belongs to the tRNA(Ile)-lysidine synthase family.

The protein localises to the cytoplasm. It catalyses the reaction cytidine(34) in tRNA(Ile2) + L-lysine + ATP = lysidine(34) in tRNA(Ile2) + AMP + diphosphate + H(+). Functionally, ligates lysine onto the cytidine present at position 34 of the AUA codon-specific tRNA(Ile) that contains the anticodon CAU, in an ATP-dependent manner. Cytidine is converted to lysidine, thus changing the amino acid specificity of the tRNA from methionine to isoleucine. The protein is tRNA(Ile)-lysidine synthase of Borreliella burgdorferi (strain ATCC 35210 / DSM 4680 / CIP 102532 / B31) (Borrelia burgdorferi).